The chain runs to 343 residues: Transmembrane protein 120A (343 aa).

Topologically, residues 1–132 (MQSPPPDPLG…KQAKFAYKDE (132 aa)) are cytoplasmic. K130 lines the CoA pocket. The helical transmembrane segment at 133–152 (YEKFKLYLTIILIVISFTCR) threads the bilayer. Topologically, residues 153 to 158 (FLLNSR) are extracellular. Residues 159 to 177 (VTDAAFNFLLVWYYCTLTI) traverse the membrane as a helical segment. The Cytoplasmic segment spans residues 178-190 (RESILINNGSRIK). CoA-binding residues include S187 and R188. The helical transmembrane segment at 191–209 (GWWVFHHYVSTFLSGVMLT) threads the bilayer. Residues 210-218 (WPDGLMYQK) are Extracellular-facing. The chain crosses the membrane as a helical span at residues 219–240 (FRNQFLSFSMYQSFVQFLQYYY). Q237, Y240, Q241, and H283 together coordinate CoA. Residues 241 to 270 (QSGCLYRLRALGERHTMDLTVEGFQSWMWR) are Cytoplasmic-facing. Residues 271 to 294 (GLTFLLPFLFFGHFWQLFNALTLF) traverse the membrane as a helical segment. The Extracellular segment spans residues 295–304 (NLARDPECKE). Residues 305-330 (WQVLMCGLPFLLLFLGNFFTTLRVVH) traverse the membrane as a helical segment. Over 331–343 (QKFHSQQHGSKKD) the chain is Cytoplasmic. K332 contributes to the CoA binding site.

It belongs to the TMEM120 family. As to quaternary structure, homodimer. Forms heterooligomer with TMEM120B. Interacts with PKD2; TMEM120A inhibits PKD2 channel activity through the physical association of PKD2 with TMEM120A.

The protein localises to the cell membrane. The protein resides in the nucleus inner membrane. It is found in the endoplasmic reticulum. In terms of biological role, multifunctional protein involved in mechanosensation, and plays an essential role in lipid metabolism and adipocyte differentiation. May function as a potential ion channel involved in sensing mechanical stimuli. Mediates the mechanosensitivity of the PKD2-TMEM120A channel complex through direct physical interaction. TMEM120A seems to affect mechanosensation by inhibiting PIEZO2 channels, possibly by altering cellular lipid content. TMEM120A is structurally similar to a lipid-modifying enzyme, ELOVL7, and contains a bound coenzyme A molecule, which suggests it might function as an enzyme in lipid metabolism. Additionnaly, implicated in innate immune response against Zika virus. Acts as a key activator of the antiviral signaling involving STING1. The sequence is that of Transmembrane protein 120A from Rattus norvegicus (Rat).